Reading from the N-terminus, the 492-residue chain is Cell death protein 6 (492 aa).

Over residues 19-29 (GNNINGEGSSS) the composition is skewed to low complexity. The disordered stretch occupies residues 19–38 (GNNINGEGSSSPSTSAPQVK). The 161-residue stretch at 55 to 215 (INGHVEYVAR…YILKKKIVEL (161 aa)) folds into the PID domain. 2 disordered regions span residues 241–385 (TGPP…STAA) and 464–492 (TGDL…NLKQ). A compositionally biased stretch (pro residues) spans 244–268 (PIYPGLGPPALPLSPMPQGPPPNIP). The span at 300-312 (ASPSVSPASTSPS) shows a compositional bias: low complexity. The segment covering 313 to 333 (GPAPSIPPPRPPALAPPPPVA) has biased composition (pro residues). Basic and acidic residues predominate over residues 373-383 (FDPRAGEKKST).

The protein belongs to the ced-6 family. As to quaternary structure, homodimer. Interacts with ced-1. Interacts with E3 ubiquitin-protein ligase trim-21. Detected in gonadal sheath cells.

The protein resides in the cytoplasm. Functionally, may function as an adapter protein in a pathway that mediates recognition and phagocytosis of apoptotic cells during normal development. Promotes engulfment of cells at both early and late stages of apoptosis. Required for actin reorganization around apoptotic cells. Plays a role in protecting dopaminergic neurons from oxidative stress-induced degeneration. Mediates recruitment of E3 ubiquitin-protein ligase trim-21 to the apoptotic cell surface which promotes ubiquitination and degradation of ced-1. The protein is Cell death protein 6 of Caenorhabditis elegans.